A 471-amino-acid chain; its full sequence is Adenosylhomocysteinase (471 aa).

3 residues coordinate substrate: threonine 60, aspartate 135, and glutamate 196. Threonine 197 to threonine 199 serves as a coordination point for NAD(+). Positions 226 and 230 each coordinate substrate. NAD(+) is bound by residues asparagine 231, glycine 260–glycine 265, glutamate 283, asparagine 318, isoleucine 339–histidine 341, and asparagine 387.

The protein belongs to the adenosylhomocysteinase family. The cofactor is NAD(+).

Its subcellular location is the cytoplasm. It carries out the reaction S-adenosyl-L-homocysteine + H2O = L-homocysteine + adenosine. It participates in amino-acid biosynthesis; L-homocysteine biosynthesis; L-homocysteine from S-adenosyl-L-homocysteine: step 1/1. Its function is as follows. May play a key role in the regulation of the intracellular concentration of adenosylhomocysteine. The chain is Adenosylhomocysteinase from Chlorobium limicola (strain DSM 245 / NBRC 103803 / 6330).